The following is a 309-amino-acid chain: Ribonuclease Z (309 aa).

Zn(2+) contacts are provided by His63, His65, Asp67, His68, His145, Asp216, and His274. Asp67 functions as the Proton acceptor in the catalytic mechanism.

The protein belongs to the RNase Z family. As to quaternary structure, homodimer. The cofactor is Zn(2+).

The enzyme catalyses Endonucleolytic cleavage of RNA, removing extra 3' nucleotides from tRNA precursor, generating 3' termini of tRNAs. A 3'-hydroxy group is left at the tRNA terminus and a 5'-phosphoryl group is left at the trailer molecule.. Its function is as follows. Zinc phosphodiesterase, which displays some tRNA 3'-processing endonuclease activity. Probably involved in tRNA maturation, by removing a 3'-trailer from precursor tRNA. This chain is Ribonuclease Z, found in Streptococcus suis (strain 98HAH33).